Consider the following 270-residue polypeptide: Sulfur carrier protein FdhD (270 aa).

The active-site Cysteine persulfide intermediate is Cys116. Residue 253-258 participates in Mo-bis(molybdopterin guanine dinucleotide) binding; the sequence is FAREGK.

This sequence belongs to the FdhD family.

It is found in the cytoplasm. Its function is as follows. Required for formate dehydrogenase (FDH) activity. Acts as a sulfur carrier protein that transfers sulfur from IscS to the molybdenum cofactor prior to its insertion into FDH. In Haemophilus influenzae (strain 86-028NP), this protein is Sulfur carrier protein FdhD.